We begin with the raw amino-acid sequence, 172 residues long: Myosin regulatory light chain RLC-A (172 aa).

Positions 1-16 are enriched in basic residues; it reads MSSKRAKTKTTKKRPQ. The segment at 1-20 is disordered; sequence MSSKRAKTKTTKKRPQRATS. Position 19 is a phosphothreonine; by MLCK (Thr19). Phosphoserine; by MLCK is present on Ser20. 3 EF-hand domains span residues 29 to 64, 98 to 133, and 134 to 169; these read SQIQEFKEAFNMIDQNRDGFIDKEDLHDMLASMGKN, DPEDVIRNAFACFDEEAIGTIQEDYLRELLTTMGDR, and FTDEEVDELYREAPIDKKGNFNYIEFTRILKHGAKD. Residues Asp42, Asn44, Asp46, and Asp53 each contribute to the Ca(2+) site.

As to quaternary structure, myosin is a hexamer of 2 heavy chains and 4 light chains. Post-translationally, phosphorylation increases the actin-activated myosin ATPase activity and thereby regulates the contractile activity.

Functionally, myosin regulatory subunit that plays an important role in regulation of both smooth muscle and nonmuscle cell contractile activity via its phosphorylation. Implicated in cytokinesis, receptor capping, and cell locomotion. This Rattus norvegicus (Rat) protein is Myosin regulatory light chain RLC-A (Rlc-a).